The sequence spans 211 residues: Transcription antitermination protein NusB (211 aa).

The protein belongs to the NusB family.

In terms of biological role, involved in transcription antitermination. Required for transcription of ribosomal RNA (rRNA) genes. Binds specifically to the boxA antiterminator sequence of the ribosomal RNA (rrn) operons. The chain is Transcription antitermination protein NusB from Gloeobacter violaceus (strain ATCC 29082 / PCC 7421).